The following is a 2294-amino-acid chain: MSFPEPVAIIGMGCRFPGDSDTPDEFWKMLAEERSGLSRPPLSRWNIDGFHANKARPGSLTPEGGYFINEDIWKFDPAFFGIVQEEAKAMDPQQRKLLECVYESFESGGITLSQLSGSNTGCYIGNFTSDYYLQGHRDHNNPKPYSLLGSGYTIISNRVSYLFDLCGPRALQTKEIDAAVVGGTNLMLAVETQMSTDKVGVLSATSTCHTFDESADGYGRAEGVGAIFLKRLSDAIRDNDPIRGVIRGTATNANGKTSGITQPSAKGHETVMRTAYEFAGLDPRDTSYFETHGTGTQVGDPIEIKGVGNFFFNGTDRQKLLVGSVKTNVGHSEAASALASIIKVCLAMEKRTIPATIGIKKLNPKIDFKGGRIEVVQKMTPWPKGFSVCRASINSFGYGGANATAIVEAADSVLPGKLTYTRRGQDERDLEASSEESESVEMVGTKSASQVRAVSRSEFLLLFSAHDISTLKSNIERCRDVAEDYNILDLAYTLGCRRSNFFNCAYTVAREDDVEEDLMEHEITFGKRGNGGNIGFIFTGQGAQNAQMGRELMLTFPSYIDTIRKLDRSLQSLGDDSPDWTIEDVLMEPAVTSKINDVEISQPVCTAVQIALVELLRLWNVTPVACIGHSSGEIASSYAANLIPAEEAIISAFYRGRGVGTLKVKGTMLAVGAGPEEIQPYLTDGLRIACYNSPNSVTLSGDIEPATIVQKKLESDRVFVRELKTGGRAYHSHHMLNIGNDYESRLSEALSRFGASQTTNQAQVQNPVFFSSVTAQQMPSNFKPGPSYWRQNLESPVRFTEAVEAALAADLGISQFVEIGPHSALAGPLRQIRDNLGITPKDLDYAATLVRGQSSVTRLLDLAGTLTMRGFSVNVERVNAIEKREGGAIITKTGLPIVDLPRFSWNYSAGEIRNKNRPDEEHRLRKFKYHDLLGAILPGSSVEQRQWRNMLDSKNFPWLEEHKLGPQPVLPGTGYLAIATEAARQFFHDKLTVSGAFRYFFPNISITSALNIPPSGSQVEIVTTMKFATITASITSKTIAEFTISSIQAGNWTNHCVGTVTKKKAVTMAPRFDESKLQEPKAARTWYRGFQKVSLNYGPAFNGLSNIRTNPALEEAVADTELCPDGVSEHDSAYIVHPAAMDTCIQVALIGAHKGSLAGLKRSFVPTSMANVSLWSWADDDHITQLTPGKGKVLAHAEFFSLRAMNGWCQLFSPEGKPLFEIEELSCTQYSEALDDLGTIDRHPYLRTVWKPDVDKMVSNLTDNSLLDLIVHKRPGFNICEILNTESMISDNLHRVLESGSSLRRYKTYTVMALGDVDIEPIKVKYEAFPGVVVQKLVLDDVPETFFDLLIVPQFPSDEIDLAKLKGLLTPGGNMLLYSSEFKNGNTIKTDLQLAGLYTLLEDKESLLISPHQRTSSDLPAGEIVLVTRTSPTVFDSHIFSGLSKSGRLITSISLQDFKFHAHTKATYVFIVESESSIFHGSLTSQELATIQSVASGATNMLWVTHGNLLEGDDPNAGIVIGLGRCLQTEHPTLTFKTLDLDHRDPIQTISNITTILNAADSGDEDKEFMVKNGIFYVSRLSQDPLLDQQFVSGVESEPKMIPYEPEKRIRLGIERVGIFDTIHFKDDELEASLKPGEVEVDVKAVGLNMKDFATLQGTYNSEILGLEGAGIVRSIGTGVTNVAIGDRKLKPEETLDQMSSIMMPFLTAIYGLIYLAKLQPGESVLINSATGGVGLAAIQIAKMIGAEIFATVGTPEKKKFLMQEYGLQDDHVLSSKDASFAAEIMQTTGGRGVDVSLNSLVREQLRATWNCIGHHGRHIELGQTDILDQGILDMSPFKRGASFIAMDLVLVFEHKPDLISQILGEIMHYYRDCKIQPLPNLSVFPVSAIGKAFEEFGKNSRIGRVVVSFDTETINTRLSLRRRRSQLLSSQMVHTYLLGVLEALVDVWLVTWLKKGARHLIFLGRSGEDRPEAASMIKDFRNDGITVDVVKGDVTRISDVQKAVDLAAGPLFGVVQGVMALDDRLFTSHDLNSWEYAVRPKVTGTWNLHNAVASHSLDFFVMLGSSSALSGFPTQSNYCAGNSFLEFFARYRQSKGLPATTISLTVVTEVGFVSQNERIEDGLARTGVHTINEAGVIDLIDTAMMKAPSSSWNLDPLANSFIVTGVEPLQLSANLDIDSIPFWRQPRIGPVFNAVLAKKSGNETGPGQNKRRLLLPDILEMIIEKFSQTFNVAVEDIDPGTEIVRFGMDSMIGTSLRTWCYKTLGADIAASDFMSLNLTADSLAKKIYDIRKG.

The Ketosynthase family 3 (KS3) domain occupies 4-409; it reads PEPVAIIGMG…GANATAIVEA (406 aa). The interval 537–853 is malonyl-CoA:ACP transacylase (MAT) domain; sequence IFTGQGAQNA…DYAATLVRGQ (317 aa). The For malonyltransferase activity role is filled by S630. The segment at 930–1067 is N-terminal hotdog fold; that stretch reads HDLLGAILPG…GTVTKKKAVT (138 aa). The segment at 930 to 1104 is dehydratase (DH) domain; the sequence is HDLLGAILPG…LNYGPAFNGL (175 aa). Positions 930 to 1236 constitute a PKS/mFAS DH domain; the sequence is HDLLGAILPG…CTQYSEALDD (307 aa). Residue H962 is the Proton acceptor; for dehydratase activity of the active site. A C-terminal hotdog fold region spans residues 1078-1236; the sequence is QEPKAARTWY…CTQYSEALDD (159 aa). D1142 (proton donor; for dehydratase activity) is an active-site residue. Residues 1618–1908 are enoyl reductase (ER) domain; it reads GIFDTIHFKD…KNSRIGRVVV (291 aa). The ketoreductase (KR) domain stretch occupies residues 1934–2107; that stretch reads VHTYLLGVLE…LPATTISLTV (174 aa). In terms of domain architecture, Carrier spans 2214 to 2292; the sequence is LLLPDILEMI…SLAKKIYDIR (79 aa). Position 2251 is an O-(pantetheine 4'-phosphoryl)serine (S2251).

It participates in polyketide biosynthesis. Its function is as follows. Reducing polyketide synthase; part of the gene cluster B that mediates the biosynthesis of botcinic acid and its botcinin derivatives, acetate-derived polyketides that contribute to virulence when combined with the sesquiterpene botrydial. Botcinic acid and its derivatives have been shown to induce chlorosis and necrosis during host plant infection, but also have antifungal activities. Two polyketide synthases, BOA6 and BOA9, are involved in the biosynthesis of botcinins. BOA6 mediates the formation of the per-methylated tetraketide core by condensation of four units of malonyl-CoA with one unit of acetyl-CoA, which would be methylated in activated methylene groups to yield a bicyclic acid intermediate that could then either be converted to botrylactone derivatives or lose the starter acetate unit through a retro-Claisen type C-C bond cleavage to yield botcinin derivatives. The second polyketide synthase, BOA9, is probably required for the biosynthesis of the tetraketide side chain of botcinins. The methyltransferase (MT) domain within BOA6 is probably responsible for the incorporation of four methyl groups. The trans-enoyl reductase BOA5 might take over the enoyl reductase function of BOA6 that misses an ER domain. The monooxygenases BOA2, BOA3 and BOA4 might be involved in further hydroxylations at C4, C5 and C8, whereas BOA7, close to BOA9, could potentially be involved in the hydroxylation at C4 in the side chain of botcinins. The protein is Reducing polyketide synthase BOA9 of Botryotinia fuckeliana (strain B05.10) (Noble rot fungus).